We begin with the raw amino-acid sequence, 123 residues long: Anti-lipopolysaccharide factor (123 aa).

The signal sequence occupies residues 1–26; the sequence is MRTRVMAGLCVALVVMCLYMPQPCEA. An intrachain disulfide couples C55 to C76.

Strong expression in hemocytes, heart and muscle, with weaker expression detected in gills and hepatopancreas. No expression detected in eyes.

Its subcellular location is the secreted. Its function is as follows. Binds to bacterial LPS and may specifically inhibit the LPS-mediated activation of the hemolymph coagulation. It has a strong antibacterial effect especially on the growth of Gram-negative bacteria. This is Anti-lipopolysaccharide factor from Scylla serrata (Mud crab).